The primary structure comprises 67 residues: Large ribosomal subunit protein eL24 (67 aa).

4 residues coordinate Zn(2+): Cys7, Cys10, Cys33, and Cys37. Residues 7 to 37 (CSYCGKPFEPGTGKMFVRNDGRVLFFCSRKC) form a C4-type zinc finger.

It belongs to the eukaryotic ribosomal protein eL24 family. Part of the 50S ribosomal subunit. Forms a cluster with proteins L3 and L14. Zn(2+) is required as a cofactor.

Functionally, binds to the 23S rRNA. This Pyrococcus abyssi (strain GE5 / Orsay) protein is Large ribosomal subunit protein eL24.